Consider the following 242-residue polypeptide: Glutamine transport ATP-binding protein GlnQ (242 aa).

The region spanning 2 to 236 (IYFHQVNKYY…PKEERAKVFL (235 aa)) is the ABC transporter domain. 34 to 41 (GPSGSGKS) is an ATP binding site.

The protein belongs to the ABC transporter superfamily.

The protein localises to the cell membrane. Its function is as follows. Part of the binding-protein-dependent transport system for glutamine. Probably responsible for energy coupling to the transport system. This is Glutamine transport ATP-binding protein GlnQ (glnQ) from Geobacillus stearothermophilus (Bacillus stearothermophilus).